Here is a 2431-residue protein sequence, read N- to C-terminus: Reducing polyketide synthase rads1 (2431 aa).

One can recognise a Ketosynthase family 3 (KS3) domain in the interval 10–440 (RAPIAIIGLA…GTNAHIVLER (431 aa)). Catalysis depends on for beta-ketoacyl synthase activity residues Cys184, His319, and His363. The segment at 558-895 (FVFTGQGAQW…NLAAELFRRG (338 aa)) is malonyl-CoA:ACP transacylase (MAT) domain. Residues 944–1080 (KSILGAELPS…GLISIAYEDT (137 aa)) are N-terminal hotdog fold. The 324-residue stretch at 944-1267 (KSILGAELPS…LAELEVDDAA (324 aa)) folds into the PKS/mFAS DH domain. Residues 946-1264 (ILGAELPSMD…DFRLAELEVD (319 aa)) are dehydratase (DH) domain. His976 (proton acceptor; for dehydratase activity) is an active-site residue. The C-terminal hotdog fold stretch occupies residues 1108 to 1267 (PETCSKERFY…LAELEVDDAA (160 aa)). Asp1174 acts as the Proton donor; for dehydratase activity in catalysis. Residues 1705–2023 (GLLNTLHFVP…QGKHLGKMIL (319 aa)) are enoyl reductase (ER) domain. Residue Cys1822 is the Phosphocysteine intermediate of the active site. A ketoreductase (KR) domain region spans residues 2048–2228 (ATYLIVGGLG…VSVNLGIMRD (181 aa)). Residues 2346–2423 (VAAAIITEAL…TFAVQIAKKS (78 aa)) enclose the Carrier domain. O-(pantetheine 4'-phosphoryl)serine is present on Ser2383.

It functions in the pathway secondary metabolite biosynthesis. Functionally, reducing polyketide synthase; part of the gene cluster that mediates the biosynthesis of radicicol, a resorcylic acid lactone (RAL) that irreversibly inhibits the HSP90 molecular chaperone, an important target for cancer chemotherapy. The cluster encodes only two apparent post-PKS enzymes, a cytochrome P450 monooxygenase (radP) and a non-heme halogenase (radH) that introduce the epoxide and the chlorine, respectively. If this cluster includes all the genes required for radicicol biosynthesis, the remaining structural features of radicicol are presumably generated by the PKSs rads1 and rads2. The C-2' ketone could arise if the R-PKS rads1 and NR-PKS rads2 each carry out four iterations, in contrast to the five iteration-three iteration split for the hypothemycin PKSs. The origin of the cis 5',6' double bond is not known. The radicicol R-PKS radS1 ER domain may catalyze either double bond isomerization or reduction in the third iteration. The sequence is that of Reducing polyketide synthase rads1 from Floropilus chiversii (Chaetomium chiversii).